The following is a 409-amino-acid chain: Translation initiation factor 2 subunit gamma (409 aa).

The tr-type G domain occupies 7–203 (QPEVNIGLVG…TIESEIPTPD (197 aa)). Residues 16-23 (GHVDHGKT) are G1. Mg(2+) contacts are provided by Asp19, Thr23, Gly44, and Ser46. Position 19–24 (19–24 (DHGKTT)) interacts with GTP. The tract at residues 44–48 (GISIR) is G2. Residues 90 to 93 (DAPG) form a G3 region. GTP contacts are provided by residues 146–149 (NKID) and 181–183 (SAQ). Positions 146–149 (NKID) are G4. The tract at residues 181 to 183 (SAQ) is G5.

It belongs to the TRAFAC class translation factor GTPase superfamily. Classic translation factor GTPase family. EIF2G subfamily. As to quaternary structure, heterotrimer composed of an alpha, a beta and a gamma chain. Requires Mg(2+) as cofactor.

It catalyses the reaction GTP + H2O = GDP + phosphate + H(+). EIF-2 functions in the early steps of protein synthesis by forming a ternary complex with GTP and initiator tRNA. This Natronomonas pharaonis (strain ATCC 35678 / DSM 2160 / CIP 103997 / JCM 8858 / NBRC 14720 / NCIMB 2260 / Gabara) (Halobacterium pharaonis) protein is Translation initiation factor 2 subunit gamma.